A 177-amino-acid polypeptide reads, in one-letter code: Putative thioredoxin peroxidase (177 aa).

Residues 1-158 (MFPKTLTDSK…IIRLIDAITF (158 aa)) form the Thioredoxin domain. The active-site Cysteine sulfenic acid (-SOH) intermediate is Cys45.

This sequence belongs to the peroxiredoxin family. AhpC/Prx1 subfamily. In terms of assembly, homodimer; disulfide-linked, upon oxidation.

The catalysed reaction is a hydroperoxide + [thioredoxin]-dithiol = an alcohol + [thioredoxin]-disulfide + H2O. Its function is as follows. Thiol-specific peroxidase that catalyzes the reduction of hydrogen peroxide and organic hydroperoxides to water and alcohols, respectively. Plays a role in cell protection against oxidative stress by detoxifying peroxides and as sensor of hydrogen peroxide-mediated signaling events. This is Putative thioredoxin peroxidase from Encephalitozoon cuniculi (strain GB-M1) (Microsporidian parasite).